Reading from the N-terminus, the 20-residue chain is Phospholipase A2 D5 (20 aa).

Ca(2+) serves as cofactor. Post-translationally, contains seven disulfide bonds. Expressed by the venom gland.

It is found in the secreted. It catalyses the reaction a 1,2-diacyl-sn-glycero-3-phosphocholine + H2O = a 1-acyl-sn-glycero-3-phosphocholine + a fatty acid + H(+). Its function is as follows. PLA2 catalyzes the calcium-dependent hydrolysis of the 2-acyl groups in 3-sn-phosphoglycerides. In Micrurus pyrrhocryptus (Coral snake), this protein is Phospholipase A2 D5.